The primary structure comprises 434 residues: Glutamate-1-semialdehyde 2,1-aminomutase 2 (434 aa).

K269 bears the N6-(pyridoxal phosphate)lysine mark.

It belongs to the class-III pyridoxal-phosphate-dependent aminotransferase family. HemL subfamily. As to quaternary structure, homodimer. It depends on pyridoxal 5'-phosphate as a cofactor.

Its subcellular location is the cytoplasm. It carries out the reaction (S)-4-amino-5-oxopentanoate = 5-aminolevulinate. The protein operates within porphyrin-containing compound metabolism; protoporphyrin-IX biosynthesis; 5-aminolevulinate from L-glutamyl-tRNA(Glu): step 2/2. This chain is Glutamate-1-semialdehyde 2,1-aminomutase 2, found in Exiguobacterium sp. (strain ATCC BAA-1283 / AT1b).